Here is a 224-residue protein sequence, read N- to C-terminus: Uracil-DNA glycosylase (224 aa).

Asp-61 serves as the catalytic Proton acceptor.

Belongs to the uracil-DNA glycosylase (UDG) superfamily. UNG family.

The protein resides in the cytoplasm. The enzyme catalyses Hydrolyzes single-stranded DNA or mismatched double-stranded DNA and polynucleotides, releasing free uracil.. Its function is as follows. Excises uracil residues from the DNA which can arise as a result of misincorporation of dUMP residues by DNA polymerase or due to deamination of cytosine. This Mannheimia succiniciproducens (strain KCTC 0769BP / MBEL55E) protein is Uracil-DNA glycosylase.